The sequence spans 671 residues: Pescadillo homolog (671 aa).

The BRCT domain maps to 317-403 (KVRELFRGLT…LMLPVTGYRI (87 aa)). Positions 548 to 584 (QALRKAQEKSRQTETSEARLQRKMSEVKRQEAATRKM) form a coiled coil. Disordered regions lie at residues 552-578 (KAQEKSRQTETSEARLQRKMSEVKRQE) and 643-671 (RRQRAEAKSKKLKERKAGNPYKKLPKWVQ).

This sequence belongs to the pescadillo family.

It localises to the nucleus. Its subcellular location is the nucleolus. It is found in the nucleoplasm. Required for maturation of ribosomal RNAs and formation of the large ribosomal subunit. The polypeptide is Pescadillo homolog (Leishmania infantum).